We begin with the raw amino-acid sequence, 207 residues long: ATP phosphoribosyltransferase (207 aa).

The protein belongs to the ATP phosphoribosyltransferase family. Short subfamily. Heteromultimer composed of HisG and HisZ subunits.

Its subcellular location is the cytoplasm. The catalysed reaction is 1-(5-phospho-beta-D-ribosyl)-ATP + diphosphate = 5-phospho-alpha-D-ribose 1-diphosphate + ATP. The protein operates within amino-acid biosynthesis; L-histidine biosynthesis; L-histidine from 5-phospho-alpha-D-ribose 1-diphosphate: step 1/9. Its function is as follows. Catalyzes the condensation of ATP and 5-phosphoribose 1-diphosphate to form N'-(5'-phosphoribosyl)-ATP (PR-ATP). Has a crucial role in the pathway because the rate of histidine biosynthesis seems to be controlled primarily by regulation of HisG enzymatic activity. The chain is ATP phosphoribosyltransferase (hisG) from Dictyoglomus turgidum (strain DSM 6724 / Z-1310).